The sequence spans 261 residues: 3-deoxy-manno-octulosonate cytidylyltransferase (261 aa).

The protein belongs to the KdsB family.

It is found in the cytoplasm. The catalysed reaction is 3-deoxy-alpha-D-manno-oct-2-ulosonate + CTP = CMP-3-deoxy-beta-D-manno-octulosonate + diphosphate. Its pathway is nucleotide-sugar biosynthesis; CMP-3-deoxy-D-manno-octulosonate biosynthesis; CMP-3-deoxy-D-manno-octulosonate from 3-deoxy-D-manno-octulosonate and CTP: step 1/1. It functions in the pathway bacterial outer membrane biogenesis; lipopolysaccharide biosynthesis. Its function is as follows. Activates KDO (a required 8-carbon sugar) for incorporation into bacterial lipopolysaccharide in Gram-negative bacteria. The chain is 3-deoxy-manno-octulosonate cytidylyltransferase from Marinobacter nauticus (strain ATCC 700491 / DSM 11845 / VT8) (Marinobacter aquaeolei).